We begin with the raw amino-acid sequence, 303 residues long: Acetylglutamate kinase (303 aa).

Residues 76 to 77, R98, and N199 each bind substrate; that span reads GG.

The protein belongs to the acetylglutamate kinase family. ArgB subfamily.

It is found in the cytoplasm. It catalyses the reaction N-acetyl-L-glutamate + ATP = N-acetyl-L-glutamyl 5-phosphate + ADP. The protein operates within amino-acid biosynthesis; L-arginine biosynthesis; N(2)-acetyl-L-ornithine from L-glutamate: step 2/4. Catalyzes the ATP-dependent phosphorylation of N-acetyl-L-glutamate. The protein is Acetylglutamate kinase of Clavibacter sepedonicus (Clavibacter michiganensis subsp. sepedonicus).